Consider the following 304-residue polypeptide: Non-specific ribonucleoside hydrolase RihC (304 aa).

Residue histidine 233 is part of the active site.

It belongs to the IUNH family. RihC subfamily.

In terms of biological role, hydrolyzes both purine and pyrimidine ribonucleosides with a broad-substrate specificity. This Shigella sonnei (strain Ss046) protein is Non-specific ribonucleoside hydrolase RihC.